Consider the following 340-residue polypeptide: Coproporphyrin III ferrochelatase (340 aa).

2 residues coordinate Fe-coproporphyrin III: Ser-52 and Tyr-116. Fe(2+) contacts are provided by His-172 and Glu-255.

It belongs to the ferrochelatase family.

Its subcellular location is the cytoplasm. The enzyme catalyses Fe-coproporphyrin III + 2 H(+) = coproporphyrin III + Fe(2+). It participates in porphyrin-containing compound metabolism; protoheme biosynthesis. Its function is as follows. Involved in coproporphyrin-dependent heme b biosynthesis. Catalyzes the insertion of ferrous iron into coproporphyrin III to form Fe-coproporphyrin III. This is Coproporphyrin III ferrochelatase from Mycobacterium marinum (strain ATCC BAA-535 / M).